The following is a 411-amino-acid chain: Corticotropin-releasing factor receptor 2 (411 aa).

The not cleaved signal peptide spans 1 to 19 (MDAALLHSLLEANCSLALA). Residues 1 to 108 (MDAALLHSLL…EPILDDKQRK (108 aa)) are Extracellular-facing. N-linked (GlcNAc...) asparagine glycosylation is found at asparagine 13, asparagine 41, asparagine 74, asparagine 86, and asparagine 94. 4 cysteine pairs are disulfide-bonded: cysteine 14-cysteine 50, cysteine 40-cysteine 83, tryptophan 51-arginine 77, and cysteine 64-cysteine 98. A helical transmembrane segment spans residues 109–139 (YDLHYRIALVVNYLGHCVSVAALVAAFLLFL). Topologically, residues 140 to 146 (ALRSIRC) are cytoplasmic. Residues 147 to 171 (LRNVIHWNLITTFILRNVMWFLLQL) traverse the membrane as a helical segment. Residues 172–185 (VDHEVHESNEVWCR) are Extracellular-facing. An intrachain disulfide couples cysteine 184 to cysteine 254. A helical transmembrane segment spans residues 186–214 (CITTIFNYFVVTNFFWMFVEGCYLHTAIV). Over 215-221 (MTYSTER) the chain is Cytoplasmic. The chain crosses the membrane as a helical span at residues 222–249 (LRKCLFLFIGWCIPFPIIVAWAIGKLYY). The Extracellular segment spans residues 250–265 (ENEQCWFGKEPGDLVD). A helical membrane pass occupies residues 266-291 (YIYQGPIILVLLINFVFLFNIVRILM). Over 292–302 (TKLRASTTSET) the chain is Cytoplasmic. A helical transmembrane segment spans residues 303-327 (IQYRKAVKATLVLLPLLGITYMLFF). The Extracellular segment spans residues 328-334 (VNPGEDD). A helical transmembrane segment spans residues 335-364 (LSQIMFIYFNSFLQSFQGFFVSVFYCFFNG). The Cytoplasmic portion of the chain corresponds to 365 to 411 (EVRSAVRKRWHRWQDHHSLRVPMARAMSIPTSPTRISFHSIKQTAAV).

The protein belongs to the G-protein coupled receptor 2 family. As to quaternary structure, monomer. Interacts (via N-terminal extracellular domain) with CRF, UCN, UCN2 and UCN3. Has highest affinity for UCN, and considerably lower affinity for CRF, UNC2 and UCN3. Post-translationally, a N-glycosylation site within the signal peptide impedes its proper cleavage and function.

Its subcellular location is the cell membrane. Its function is as follows. G-protein coupled receptor for CRH (corticotropin-releasing factor), UCN (urocortin), UCN2 and UCN3. Has high affinity for UCN. Ligand binding causes a conformation change that triggers signaling via guanine nucleotide-binding proteins (G proteins) and down-stream effectors, such as adenylate cyclase. Promotes the activation of adenylate cyclase, leading to increased intracellular cAMP levels. This is Corticotropin-releasing factor receptor 2 (CRHR2) from Homo sapiens (Human).